Reading from the N-terminus, the 308-residue chain is Ornithine carbamoyltransferase (308 aa).

Carbamoyl phosphate contacts are provided by residues 56-59 (STRT), Gln83, Arg107, and 134-137 (HPCQ). Residues Asn165, Asp225, and 229-230 (SM) contribute to the L-ornithine site. Residues 266-267 (CL) and Arg294 contribute to the carbamoyl phosphate site.

Belongs to the aspartate/ornithine carbamoyltransferase superfamily. OTCase family.

The protein resides in the cytoplasm. The enzyme catalyses carbamoyl phosphate + L-ornithine = L-citrulline + phosphate + H(+). Its pathway is amino-acid biosynthesis; L-arginine biosynthesis; L-arginine from L-ornithine and carbamoyl phosphate: step 1/3. Its function is as follows. Reversibly catalyzes the transfer of the carbamoyl group from carbamoyl phosphate (CP) to the N(epsilon) atom of ornithine (ORN) to produce L-citrulline. The chain is Ornithine carbamoyltransferase from Roseobacter denitrificans (strain ATCC 33942 / OCh 114) (Erythrobacter sp. (strain OCh 114)).